The chain runs to 582 residues: Dihydroxy-acid dehydratase 3 (582 aa).

Cysteine 67 is a binding site for [2Fe-2S] cluster. Position 99 (aspartate 99) interacts with Mg(2+). Cysteine 140 provides a ligand contact to [2Fe-2S] cluster. The Mg(2+) site is built by aspartate 141 and lysine 142. N6-carboxylysine is present on lysine 142. A [2Fe-2S] cluster-binding site is contributed by cysteine 212. Residue glutamate 462 coordinates Mg(2+). Serine 488 serves as the catalytic Proton acceptor.

It belongs to the IlvD/Edd family. Homodimer. Requires [2Fe-2S] cluster as cofactor. It depends on Mg(2+) as a cofactor.

It catalyses the reaction (2R)-2,3-dihydroxy-3-methylbutanoate = 3-methyl-2-oxobutanoate + H2O. It carries out the reaction (2R,3R)-2,3-dihydroxy-3-methylpentanoate = (S)-3-methyl-2-oxopentanoate + H2O. The protein operates within amino-acid biosynthesis; L-isoleucine biosynthesis; L-isoleucine from 2-oxobutanoate: step 3/4. It participates in amino-acid biosynthesis; L-valine biosynthesis; L-valine from pyruvate: step 3/4. In terms of biological role, functions in the biosynthesis of branched-chain amino acids. Catalyzes the dehydration of (2R,3R)-2,3-dihydroxy-3-methylpentanoate (2,3-dihydroxy-3-methylvalerate) into 2-oxo-3-methylpentanoate (2-oxo-3-methylvalerate) and of (2R)-2,3-dihydroxy-3-methylbutanoate (2,3-dihydroxyisovalerate) into 2-oxo-3-methylbutanoate (2-oxoisovalerate), the penultimate precursor to L-isoleucine and L-valine, respectively. This is Dihydroxy-acid dehydratase 3 from Bradyrhizobium diazoefficiens (strain JCM 10833 / BCRC 13528 / IAM 13628 / NBRC 14792 / USDA 110).